The chain runs to 160 residues: RTX-II toxin-activating lysine-acyltransferase ApxIIC (160 aa).

Residues histidine 23 and aspartate 92 contribute to the active site.

The protein belongs to the RTX toxin acyltransferase family. In terms of assembly, homodimer.

Its subcellular location is the cytoplasm. It carries out the reaction a fatty acyl-[ACP] + L-lysyl-[protein] = N(6)-(fatty acyl)-L-lysyl-[protein] + holo-[ACP] + H(+). In terms of biological role, protein-lysine acyltransferase that catalyzes fatty acylation of the protoxin, thereby converting it to the active toxin. This chain is RTX-II toxin-activating lysine-acyltransferase ApxIIC (apxIIC), found in Actinobacillus pleuropneumoniae (Haemophilus pleuropneumoniae).